Here is a 290-residue protein sequence, read N- to C-terminus: Porphobilinogen deaminase (290 aa).

An S-(dipyrrolylmethanemethyl)cysteine modification is found at Cys-237.

Belongs to the HMBS family. Monomer. The cofactor is dipyrromethane.

It carries out the reaction 4 porphobilinogen + H2O = hydroxymethylbilane + 4 NH4(+). It participates in porphyrin-containing compound metabolism; protoporphyrin-IX biosynthesis; coproporphyrinogen-III from 5-aminolevulinate: step 2/4. In terms of biological role, tetrapolymerization of the monopyrrole PBG into the hydroxymethylbilane pre-uroporphyrinogen in several discrete steps. The polypeptide is Porphobilinogen deaminase (Clostridium botulinum (strain Loch Maree / Type A3)).